Consider the following 334-residue polypeptide: Holliday junction branch migration complex subunit RuvB (334 aa).

The large ATPase domain (RuvB-L) stretch occupies residues 1 to 182 (MDDRMIDGEL…FGVLSRLEYY (182 aa)). ATP-binding positions include leucine 21, arginine 22, glycine 63, lysine 66, threonine 67, threonine 68, 129–131 (EDF), arginine 172, tyrosine 182, and arginine 219. Threonine 67 contacts Mg(2+). Positions 183–253 (EIKDLCNIVE…STKQALEMLQ (71 aa)) are small ATPAse domain (RuvB-S). The interval 256-334 (DAGLDHVDHK…HLGIKRTGED (79 aa)) is head domain (RuvB-H). 2 residues coordinate DNA: arginine 311 and arginine 316.

The protein belongs to the RuvB family. Homohexamer. Forms an RuvA(8)-RuvB(12)-Holliday junction (HJ) complex. HJ DNA is sandwiched between 2 RuvA tetramers; dsDNA enters through RuvA and exits via RuvB. An RuvB hexamer assembles on each DNA strand where it exits the tetramer. Each RuvB hexamer is contacted by two RuvA subunits (via domain III) on 2 adjacent RuvB subunits; this complex drives branch migration. In the full resolvosome a probable DNA-RuvA(4)-RuvB(12)-RuvC(2) complex forms which resolves the HJ.

The protein resides in the cytoplasm. It carries out the reaction ATP + H2O = ADP + phosphate + H(+). In terms of biological role, the RuvA-RuvB-RuvC complex processes Holliday junction (HJ) DNA during genetic recombination and DNA repair, while the RuvA-RuvB complex plays an important role in the rescue of blocked DNA replication forks via replication fork reversal (RFR). RuvA specifically binds to HJ cruciform DNA, conferring on it an open structure. The RuvB hexamer acts as an ATP-dependent pump, pulling dsDNA into and through the RuvAB complex. RuvB forms 2 homohexamers on either side of HJ DNA bound by 1 or 2 RuvA tetramers; 4 subunits per hexamer contact DNA at a time. Coordinated motions by a converter formed by DNA-disengaged RuvB subunits stimulates ATP hydrolysis and nucleotide exchange. Immobilization of the converter enables RuvB to convert the ATP-contained energy into a lever motion, pulling 2 nucleotides of DNA out of the RuvA tetramer per ATP hydrolyzed, thus driving DNA branch migration. The RuvB motors rotate together with the DNA substrate, which together with the progressing nucleotide cycle form the mechanistic basis for DNA recombination by continuous HJ branch migration. Branch migration allows RuvC to scan DNA until it finds its consensus sequence, where it cleaves and resolves cruciform DNA. This Oceanobacillus iheyensis (strain DSM 14371 / CIP 107618 / JCM 11309 / KCTC 3954 / HTE831) protein is Holliday junction branch migration complex subunit RuvB.